Consider the following 338-residue polypeptide: Ketol-acid reductoisomerase (NADP(+)) (338 aa).

The region spanning M1–T181 is the KARI N-terminal Rossmann domain. Residues Y24 to Q27, R47, and S52 contribute to the NADP(+) site. The active site involves H107. G133 lines the NADP(+) pocket. The KARI C-terminal knotted domain maps to T182 to I327. Mg(2+)-binding residues include D190, E194, E226, and E230. A substrate-binding site is contributed by S251.

This sequence belongs to the ketol-acid reductoisomerase family. The cofactor is Mg(2+).

It catalyses the reaction (2R)-2,3-dihydroxy-3-methylbutanoate + NADP(+) = (2S)-2-acetolactate + NADPH + H(+). It carries out the reaction (2R,3R)-2,3-dihydroxy-3-methylpentanoate + NADP(+) = (S)-2-ethyl-2-hydroxy-3-oxobutanoate + NADPH + H(+). It functions in the pathway amino-acid biosynthesis; L-isoleucine biosynthesis; L-isoleucine from 2-oxobutanoate: step 2/4. Its pathway is amino-acid biosynthesis; L-valine biosynthesis; L-valine from pyruvate: step 2/4. In terms of biological role, involved in the biosynthesis of branched-chain amino acids (BCAA). Catalyzes an alkyl-migration followed by a ketol-acid reduction of (S)-2-acetolactate (S2AL) to yield (R)-2,3-dihydroxy-isovalerate. In the isomerase reaction, S2AL is rearranged via a Mg-dependent methyl migration to produce 3-hydroxy-3-methyl-2-ketobutyrate (HMKB). In the reductase reaction, this 2-ketoacid undergoes a metal-dependent reduction by NADPH to yield (R)-2,3-dihydroxy-isovalerate. The chain is Ketol-acid reductoisomerase (NADP(+)) from Nitrosomonas europaea (strain ATCC 19718 / CIP 103999 / KCTC 2705 / NBRC 14298).